The chain runs to 178 residues: Arginine repressor (178 aa).

The disordered stretch occupies residues 1–21; that stretch reads MSQAQENEHAGPAVPQTRTAR.

This sequence belongs to the ArgR family.

It is found in the cytoplasm. It participates in amino-acid biosynthesis; L-arginine biosynthesis [regulation]. In terms of biological role, regulates arginine biosynthesis genes. The chain is Arginine repressor from Streptomyces avermitilis (strain ATCC 31267 / DSM 46492 / JCM 5070 / NBRC 14893 / NCIMB 12804 / NRRL 8165 / MA-4680).